A 247-amino-acid chain; its full sequence is Putative methyltransferase GWCH70_2453 (247 aa).

The protein belongs to the methyltransferase superfamily.

Functionally, may be a S-adenosyl-L-methionine (SAM)-dependent methyltransferase. This chain is Putative methyltransferase GWCH70_2453, found in Geobacillus sp. (strain WCH70).